A 130-amino-acid chain; its full sequence is Ribosome-binding factor A (130 aa).

Belongs to the RbfA family. As to quaternary structure, monomer. Binds 30S ribosomal subunits, but not 50S ribosomal subunits or 70S ribosomes.

It is found in the cytoplasm. Its function is as follows. One of several proteins that assist in the late maturation steps of the functional core of the 30S ribosomal subunit. Associates with free 30S ribosomal subunits (but not with 30S subunits that are part of 70S ribosomes or polysomes). Required for efficient processing of 16S rRNA. May interact with the 5'-terminal helix region of 16S rRNA. This is Ribosome-binding factor A from Prochlorococcus marinus (strain MIT 9215).